The sequence spans 379 residues: Anhydro-N-acetylmuramic acid kinase (379 aa).

Residue 9 to 16 (GTSVDGID) coordinates ATP.

This sequence belongs to the anhydro-N-acetylmuramic acid kinase family.

It catalyses the reaction 1,6-anhydro-N-acetyl-beta-muramate + ATP + H2O = N-acetyl-D-muramate 6-phosphate + ADP + H(+). The protein operates within amino-sugar metabolism; 1,6-anhydro-N-acetylmuramate degradation. Its pathway is cell wall biogenesis; peptidoglycan recycling. In terms of biological role, catalyzes the specific phosphorylation of 1,6-anhydro-N-acetylmuramic acid (anhMurNAc) with the simultaneous cleavage of the 1,6-anhydro ring, generating MurNAc-6-P. Is required for the utilization of anhMurNAc either imported from the medium or derived from its own cell wall murein, and thus plays a role in cell wall recycling. This Picosynechococcus sp. (strain ATCC 27264 / PCC 7002 / PR-6) (Agmenellum quadruplicatum) protein is Anhydro-N-acetylmuramic acid kinase.